A 247-amino-acid polypeptide reads, in one-letter code: Protein NipSnap homolog 3B (247 aa).

Lysine 45 and lysine 57 each carry N6-succinyllysine.

This sequence belongs to the NipSnap family.

The protein is Protein NipSnap homolog 3B (NIPSNAP3B) of Homo sapiens (Human).